The chain runs to 100 residues: Suppressor of silencing 2b (100 aa).

Positions 22-27 (KRRRRR) match the Nuclear localization signal motif.

This sequence belongs to the cucumovirus/ilarvirus protein 2b family. Homotetramer. Interacts with host AGO1; this interaction blocks AGO1 cleavage activity to attenuate RNA silencing and thus counter host defense. Interacts with host JAZ.

It is found in the host nucleus. Its function is as follows. Multifunctional protein that plays two independent roles: viral suppressor of host RNAi (VSR) and viral inducer of host attractiveness to insect vectors (VIA). Acts as a suppressor of RNA-mediated gene silencing, also known as post-transcriptional gene silencing (PTGS), a mechanism of plant viral defense that limits the accumulation of viral RNAs. May directly interfere with mobile silencing signaling. Also inhibits signal transduction by the phytohormone jasmonate, making the infected plant more attractive to aphids, which are the second host to play a role as a dissemination vector. Acts by binding to and inhibiting JAZ degradation in the host. This chain is Suppressor of silencing 2b, found in Cucumis sativus (Cucumber).